The primary structure comprises 383 residues: MYVAGVMSGTSLDGIDVALVHIEGSGVGSKVELIHFTTVPFRNDIKNEIQQVLSIKNSNVQLICSLNFKLGLCFAKAVKEVCKEANFSLEQLDLIGSHGQTIYHQPKPEGNMISSTLQIGEPAVIAYETNTTVISNFRTMDMAAGGQGAPLVPYSEIILYRHPTKNRLLQNIGGIGNVTVIPSQKSDQNVIAFDTGPGNMIIDEVCQRLFQLPYDQNGEIAEQGEVVDEILTYCMNHSFLKMNPPKSTGREQFGEEFVSQLLKRYEKHSKENILTTVTMFTASSIVHHYKEFILPYYEIDEVILGGGGSYNDTLVEMIRYGLKDEKCTIFIQEDIGYSSEAKEAIAFAILANETYHRNPSNVPSATGAMQSVVLGNITFPPIR.

9-16 (GTSLDGID) serves as a coordination point for ATP.

The protein belongs to the anhydro-N-acetylmuramic acid kinase family.

It catalyses the reaction 1,6-anhydro-N-acetyl-beta-muramate + ATP + H2O = N-acetyl-D-muramate 6-phosphate + ADP + H(+). Its pathway is amino-sugar metabolism; 1,6-anhydro-N-acetylmuramate degradation. It functions in the pathway cell wall biogenesis; peptidoglycan recycling. Functionally, catalyzes the specific phosphorylation of 1,6-anhydro-N-acetylmuramic acid (anhMurNAc) with the simultaneous cleavage of the 1,6-anhydro ring, generating MurNAc-6-P. Is required for the utilization of anhMurNAc either imported from the medium or derived from its own cell wall murein, and thus plays a role in cell wall recycling. This Bacillus cereus (strain ATCC 10987 / NRS 248) protein is Anhydro-N-acetylmuramic acid kinase.